A 233-amino-acid polypeptide reads, in one-letter code: Bcl-2-like protein 1 (233 aa).

The BH4 signature appears at 4 to 24 (SNRELVVDFLSYKLSQKGYSW). The tract at residues 27–73 (FSDVEENRTEAPEETEAERETPSAINGNPSWHLADSPAVNGATGHSS) is disordered. Ser49 carries the phosphoserine; by PLK3 modification. Ser62 is modified (phosphoserine; by CDK1). The BH3 signature appears at 86–100 (VKQALREAGDEFELR). Positions 129-148 (ELFRDGVNWGRIVAFFSFGG) match the BH1 motif. Residues 180–195 (PWIQENGGWDTFVDLY) carry the BH2 motif. A helical transmembrane segment spans residues 210–226 (FNRWFLTGMTVAGVVLL).

This sequence belongs to the Bcl-2 family. Homodimer. Interacts with BAD. Interacts with PGAM5. Interacts with HEBP2. Interacts with p53/TP53 and BBC3; interaction with BBC3 disrupts the interaction with p53/TP53. Interacts with ATP5F1A and ATP5F1B; the interactions mediate the association of isoform Bcl-X(L) with the mitochondrial membrane ATP synthase F(1)F(0) ATP synthase. Interacts with VDAC1. Interacts with BCL2L11 (via BH3). Interacts with RNF183. Interacts with GIMAP3/IAN4 and GIMAP5/IAN5. Interacts with GIMAP5 and HSPA8/HSC70; the interaction between HSPA8 and BCL2L1 is impaired in the absence of GIMAP5. Interacts with isoform 4 of CLU; this interaction releases and activates BAX and promotes cell death. In terms of assembly, forms heterodimers with BAX, BAK or BCL2; heterodimerization with BAX does not seem to be required for anti-apoptotic activity. Interacts with isoform 1 of SIVA1; the interaction inhibits the anti-apoptotic activity. Interacts with IKZF3. Interacts with RTL10/BOP. Interacts with DNM1L and CLTA; DNM1L and BCL2L1 isoform BCL-X(L) may form a complex in synaptic vesicles that also contains clathrin and MFF. Interacts (via the loop between motifs BH4 and BH3) with NLRP1 (via LRR repeats), but not with NLRP2, NLRP3, NLRP4, PYCARD, nor MEFV. Interacts with BECN1. In terms of processing, proteolytically cleaved by caspases during apoptosis. The cleaved protein, lacking the BH4 motif, has pro-apoptotic activity. Phosphorylated on Ser-62 by CDK1. This phosphorylation is partial in normal mitotic cells, but complete in G2-arrested cells upon DNA-damage, thus promoting subsequent apoptosis probably by triggering caspases-mediated proteolysis. Phosphorylated by PLK3, leading to regulate the G2 checkpoint and progression to cytokinesis during mitosis. Phosphorylation at Ser-49 appears during the S phase and G2, disappears rapidly in early mitosis during prometaphase, metaphase and early anaphase, and re-appears during telophase and cytokinesis. Post-translationally, ubiquitinated by RNF183 during prolonged ER stress, leading to degradation by the proteosome. As to expression, widely expressed, with highest levels in the brain, thymus, bone marrow, and kidney. Bcl-X(L) and Bcl-X(delta-TM) expression is enhanced in B- and T-lymphocytes that have been activated.

The protein resides in the mitochondrion membrane. It localises to the nucleus membrane. The protein localises to the cytoplasm. It is found in the cytoskeleton. Its subcellular location is the microtubule organizing center. The protein resides in the centrosome. It localises to the mitochondrion inner membrane. The protein localises to the mitochondrion outer membrane. It is found in the mitochondrion matrix. Its subcellular location is the cytoplasmic vesicle. The protein resides in the secretory vesicle. It localises to the synaptic vesicle membrane. The protein localises to the cytosol. Potent inhibitor of cell death. Inhibits activation of caspases. Appears to regulate cell death by blocking the voltage-dependent anion channel (VDAC) by binding to it and preventing the release of the caspase activator, CYC1, from the mitochondrial membrane. Also acts as a regulator of G2 checkpoint and progression to cytokinesis during mitosis. In terms of biological role, isoform Bcl-X(L) also regulates presynaptic plasticity, including neurotransmitter release and recovery, number of axonal mitochondria as well as size and number of synaptic vesicle clusters. During synaptic stimulation, increases ATP availability from mitochondria through regulation of mitochondrial membrane ATP synthase F(1)F(0) activity and regulates endocytic vesicle retrieval in hippocampal neurons through association with DMN1L and stimulation of its GTPase activity in synaptic vesicles. May attenuate inflammation impairing NLRP1-inflammasome activation, hence CASP1 activation and IL1B release. Its function is as follows. Isoform Bcl-X(S) promotes apoptosis. This Mus musculus (Mouse) protein is Bcl-2-like protein 1 (Bcl2l1).